Reading from the N-terminus, the 193-residue chain is Acyl carrier protein phosphodiesterase (193 aa).

It belongs to the AcpH family.

The catalysed reaction is holo-[ACP] + H2O = apo-[ACP] + (R)-4'-phosphopantetheine + H(+). In terms of biological role, converts holo-ACP to apo-ACP by hydrolytic cleavage of the phosphopantetheine prosthetic group from ACP. The protein is Acyl carrier protein phosphodiesterase of Escherichia coli O6:K15:H31 (strain 536 / UPEC).